The primary structure comprises 352 residues: Heat-inducible transcription repressor HrcA (352 aa).

This sequence belongs to the HrcA family.

Functionally, negative regulator of class I heat shock genes (grpE-dnaK-dnaJ and groELS operons). Prevents heat-shock induction of these operons. This chain is Heat-inducible transcription repressor HrcA, found in Lactobacillus gasseri (strain ATCC 33323 / DSM 20243 / BCRC 14619 / CIP 102991 / JCM 1131 / KCTC 3163 / NCIMB 11718 / NCTC 13722 / AM63).